A 54-amino-acid chain; its full sequence is Defensin-like protein (54 aa).

Glutamine 1 carries the pyrrolidone carboxylic acid modification. Disulfide bonds link cysteine 4–cysteine 52, cysteine 16–cysteine 37, cysteine 22–cysteine 47, and cysteine 26–cysteine 49.

It belongs to the DEFL family. In terms of assembly, monomer.

The protein localises to the secreted. Its function is as follows. Taste-modifying protein; sweet-tasting. It is 2000 sweeter than sucrose on a molar basis. In terms of biological role, has a pH-specific antimicrobial activity against bacteria (B.subtilis, E.coli and S.aureus) and the fungus C.albicans. The chain is Defensin-like protein from Pentadiplandra brazzeana.